A 253-amino-acid polypeptide reads, in one-letter code: Ubiquinone biosynthesis O-methyltransferase (253 aa).

Positions 47, 78, 99, and 141 each coordinate S-adenosyl-L-methionine.

The protein belongs to the methyltransferase superfamily. UbiG/COQ3 family.

The enzyme catalyses a 3-demethylubiquinol + S-adenosyl-L-methionine = a ubiquinol + S-adenosyl-L-homocysteine + H(+). It catalyses the reaction a 3-(all-trans-polyprenyl)benzene-1,2-diol + S-adenosyl-L-methionine = a 2-methoxy-6-(all-trans-polyprenyl)phenol + S-adenosyl-L-homocysteine + H(+). It functions in the pathway cofactor biosynthesis; ubiquinone biosynthesis. In terms of biological role, O-methyltransferase that catalyzes the 2 O-methylation steps in the ubiquinone biosynthetic pathway. The polypeptide is Ubiquinone biosynthesis O-methyltransferase (Rhodopseudomonas palustris (strain ATCC BAA-98 / CGA009)).